The primary structure comprises 111 residues: Large ribosomal subunit protein uL22 (111 aa).

This sequence belongs to the universal ribosomal protein uL22 family. In terms of assembly, part of the 50S ribosomal subunit.

Its function is as follows. This protein binds specifically to 23S rRNA; its binding is stimulated by other ribosomal proteins, e.g. L4, L17, and L20. It is important during the early stages of 50S assembly. It makes multiple contacts with different domains of the 23S rRNA in the assembled 50S subunit and ribosome. Functionally, the globular domain of the protein is located near the polypeptide exit tunnel on the outside of the subunit, while an extended beta-hairpin is found that lines the wall of the exit tunnel in the center of the 70S ribosome. This Acholeplasma laidlawii protein is Large ribosomal subunit protein uL22.